Here is a 498-residue protein sequence, read N- to C-terminus: WD repeat-containing protein 55 homolog (498 aa).

The interval 1-133 is disordered; it reads MHTHNNFKTP…TFDLDEDDET (133 aa). Acidic residues-rich tracts occupy residues 12 to 23, 31 to 48, and 83 to 95; these read DEDELDDLDEDM, IEQEVLNESDSDNDEYDL, and SDSDDSMLDDAGD. Positions 114-123 are enriched in polar residues; the sequence is PSGSNRQSEA. WD repeat units follow at residues 155–194, 199–238, 242–280, 283–322, 325–364, and 409–448; these read KLEDFITDICFHPDRDIIALATIIGDVHLYEYDNEANKLL, VHSKACRDVEFTEDGRFLLTCSKDKCVMVTDMETEKLKKL, AHDDAINTLHVLNENLFATGDDAGTVKLWDLRTKNAIFE, ELEDQITQLTTNDQSKLLLATSADGYLTTFNIAARKMYVQ, PYEEELSCMGIYRGDSKLVVGTSKGRLYTYNWGQFGYHCD, and QHNMPIESLDVNSNGELIASSSHNNDVRFWNVKYFEDFGD.

The protein belongs to the WD repeat WDR55 family.

This chain is WD repeat-containing protein 55 homolog, found in Drosophila erecta (Fruit fly).